Consider the following 267-residue polypeptide: Small ribosomal subunit protein uS3 (267 aa).

The KH type-2 domain occupies Ile43 to Lys111. Residues Phe216–Glu267 are disordered. Positions Arg241–Glu267 are enriched in low complexity.

The protein belongs to the universal ribosomal protein uS3 family. In terms of assembly, part of the 30S ribosomal subunit. Forms a tight complex with proteins S10 and S14.

Its function is as follows. Binds the lower part of the 30S subunit head. Binds mRNA in the 70S ribosome, positioning it for translation. This Bifidobacterium longum (strain DJO10A) protein is Small ribosomal subunit protein uS3.